The primary structure comprises 149 residues: MADIIKLHDLRPAAGSNKPKTRVGRGEASKGKTAGRGTKGTGARKQVPAAFEGGQMPIHMRLPKLKGFKNPNHVEYQVVNVADLAEAFANGGDVTVADIVAAGLVRKNQPVKVLGNGEINVKLNVTADKFSKSAVEKIEAAGGTATATK.

Residues 8 to 49 are disordered; that stretch reads HDLRPAAGSNKPKTRVGRGEASKGKTAGRGTKGTGARKQVPA. The segment covering 31–45 has biased composition (low complexity); sequence GKTAGRGTKGTGARK.

This sequence belongs to the universal ribosomal protein uL15 family. Part of the 50S ribosomal subunit.

In terms of biological role, binds to the 23S rRNA. This Corynebacterium aurimucosum (strain ATCC 700975 / DSM 44827 / CIP 107346 / CN-1) (Corynebacterium nigricans) protein is Large ribosomal subunit protein uL15.